Consider the following 372-residue polypeptide: Glutamate 5-kinase (372 aa).

Lys-9 lines the ATP pocket. Residues Ser-49, Asp-136, and Asn-148 each coordinate substrate. Residues 168–169 and 210–216 contribute to the ATP site; these read TD and TGGMKSK. The PUA domain occupies 276–360; that stretch reads EGKVFIDDGA…PAIEVIHRDS (85 aa).

It belongs to the glutamate 5-kinase family.

It is found in the cytoplasm. It carries out the reaction L-glutamate + ATP = L-glutamyl 5-phosphate + ADP. The protein operates within amino-acid biosynthesis; L-proline biosynthesis; L-glutamate 5-semialdehyde from L-glutamate: step 1/2. Functionally, catalyzes the transfer of a phosphate group to glutamate to form L-glutamate 5-phosphate. This Oceanobacillus iheyensis (strain DSM 14371 / CIP 107618 / JCM 11309 / KCTC 3954 / HTE831) protein is Glutamate 5-kinase.